The sequence spans 375 residues: MSVPAFIDITEEDQASELRSYLKSKGAEISEENSEGGLHVDLAQIIEACDVCLKDDDKDVESVMNSIVSLLLILETEKQEALIESLCEKLVKFREGERPSLRMQLLSNLFHGMDENTPVRHTVYCSLIKVAATCNAITFMPTDLDQVRKWIVDWNLNTEKKHTLLRLVYEALVDCKKSEAAAKVMVELLGSYTEDNASQARVDAHRCIVRALKDPNTYLFDHLLALKPVRFLEGELIHDLLTIFVSAKLISYVKFYQSNKDFIESLGLSHEQNMSKMRLLTFMGMAVEMKEISFETMQQELQIGAEDVEAFVIDAVRTKMVYSKIDQTQRKVVVSHSTHRTFGKQQWQQLYDTLCSWKQNLSTVKSSLQTLSPTA.

One can recognise a PCI domain in the interval 180 to 339; the sequence is AAAKVMVELL…RKVVVSHSTH (160 aa).

Belongs to the eIF-3 subunit M family. As to quaternary structure, component of the eukaryotic translation initiation factor 3 (eIF-3) complex, which is composed of 13 subunits: eif3a, eif3b, eif3c, eif3d, eif3e, eif3f, eif3g, eif3h, eif3i, eif3j, eif3k, eif3l and eif3m.

The protein resides in the cytoplasm. Functionally, component of the eukaryotic translation initiation factor 3 (eIF-3) complex, which is involved in protein synthesis of a specialized repertoire of mRNAs and, together with other initiation factors, stimulates binding of mRNA and methionyl-tRNAi to the 40S ribosome. The eIF-3 complex specifically targets and initiates translation of a subset of mRNAs involved in cell proliferation. The polypeptide is Eukaryotic translation initiation factor 3 subunit M (eif3m) (Danio rerio (Zebrafish)).